The primary structure comprises 359 residues: Photosystem II protein D1 3 (359 aa).

Transmembrane regions (helical) follow at residues 29-46 (YVGW…AATI), 118-133 (HFLI…EWEL), and 142-156 (WICV…AASA). H118 contributes to the chlorophyll a binding site. Y126 is a binding site for pheophytin a. Residues D170 and E189 each contribute to the [CaMn4O5] cluster site. A helical transmembrane segment spans residues 197–218 (FHMLGVAGVFGGSLFSAMHGSL). H198 is a chlorophyll a binding site. Residues H215 and 264-265 (SF) each bind a quinone. H215 is a binding site for Fe cation. H272 provides a ligand contact to Fe cation. A helical membrane pass occupies residues 274-288 (FLAAWPVVGIWFTAL). [CaMn4O5] cluster is bound by residues H332, E333, D342, and A344. The propeptide occupies 345–359 (AAESTPVALQVPAIG).

The protein belongs to the reaction center PufL/M/PsbA/D family. In terms of assembly, PSII is composed of 1 copy each of membrane proteins PsbA, PsbB, PsbC, PsbD, PsbE, PsbF, PsbH, PsbI, PsbJ, PsbK, PsbL, PsbM, PsbT, PsbX, PsbY, PsbZ, Psb30/Ycf12, peripheral proteins PsbO, CyanoQ (PsbQ), PsbU, PsbV and a large number of cofactors. It forms dimeric complexes. Requires The D1/D2 heterodimer binds P680, chlorophylls that are the primary electron donor of PSII, and subsequent electron acceptors. It shares a non-heme iron and each subunit binds pheophytin, quinone, additional chlorophylls, carotenoids and lipids. D1 provides most of the ligands for the Mn4-Ca-O5 cluster of the oxygen-evolving complex (OEC). There is also a Cl(-1) ion associated with D1 and D2, which is required for oxygen evolution. The PSII complex binds additional chlorophylls, carotenoids and specific lipids. as cofactor. Tyr-161 forms a radical intermediate that is referred to as redox-active TyrZ, YZ or Y-Z. Post-translationally, C-terminally processed by CtpA; processing is essential to allow assembly of the oxygen-evolving complex and thus photosynthetic growth.

Its subcellular location is the cellular thylakoid membrane. It catalyses the reaction 2 a plastoquinone + 4 hnu + 2 H2O = 2 a plastoquinol + O2. In terms of biological role, photosystem II (PSII) is a light-driven water:plastoquinone oxidoreductase that uses light energy to abstract electrons from H(2)O, generating O(2) and a proton gradient subsequently used for ATP formation. It consists of a core antenna complex that captures photons, and an electron transfer chain that converts photonic excitation into a charge separation. The D1/D2 (PsbA/PsbD) reaction center heterodimer binds P680, the primary electron donor of PSII as well as several subsequent electron acceptors. The chain is Photosystem II protein D1 3 from Parasynechococcus marenigrum (strain WH8102).